We begin with the raw amino-acid sequence, 773 residues long: MGRLNRFRLGKDGRREQASLSRRGFLVTSLGAGVMFGFARPSSANQIFPLDRSLPGDGAFEPTIWCSIAPDGEITVNIIRAEMGQHIGTALARIIADEMEADWSKVRINYVDTDPKWGLMVTGGSWSVWMTWDVFRQAGAATRTAMVEEGARLLGTTPDKCTVASSIVSAGGKQISFGDIVAKGHPSHAFTPEEMAKLPLKPASERRLIGNAELKALDIPAKTNGTAIYGIDAKVEGMLYGRPKMPPTRYGSKVRSVDDTEAKKIKGYVRYLLIDDPSQVVQGWVVVLAESYSAAIRATDALKVEWTPGETIHTSERDIQDRGRELINNKAGGVYIFNDDGVDQAFGSAHTVMDQEYTCASVLHYQLEPTNALAFEKDGVYEIHAGNQWQSLILPTLAKSLQVPESKVILRSYLLGGGFGRRLNGDYMIPAALASKALGGKPVKLILTRSDDMQFDSFRSPSVQRVRMAFDASDRITAMDYQAAAGWPTGVMAEAFMEKGVDGKPYDQFAIAGGDHWYEVGAFRVRALRNDLAEKTFRPGWLRSVSPGWTSWGVECFLDEVAHRQKKDPAQFRLELLTGQGRNKGQAPDSVGGALRQAAVVRRLMEKVNWGKTSLPKDTAMGLATTAGQERGMPTWDRCVAQVHVDRSTGVVTCQKLTILVDAGTVVDPDGAKAQTEGAALWGLSMVLFENTEIVNGMPVDRNLNTYTPLRIADTPEMDIEFLPSTEKPMGLGEPGTTVVGPAIGNAIFNAVGVRLRHMPVRPADVLRGLQNG.

Positions 1 to 44 (MGRLNRFRLGKDGRREQASLSRRGFLVTSLGAGVMFGFARPSSA) form a signal peptide, tat-type signal.

Pyrroloquinoline quinone is required as a cofactor. Post-translationally, predicted to be exported by the Tat system. The position of the signal peptide cleavage has been experimentally proven.

It localises to the cell inner membrane. It carries out the reaction an aldehyde + a quinone + H2O = a quinol + a carboxylate + H(+). This chain is Membrane-bound aldehyde dehydrogenase [pyrroloquinoline-quinone], found in Gluconacetobacter polyoxogenes (Acetobacter polyoxogenes).